The primary structure comprises 607 residues: Chaperone protein HtpG (607 aa).

An a; substrate-binding region spans residues 1-323 (MKKEEKIFKA…CDSLSLNISR (323 aa)). The b stretch occupies residues 324–534 (EILQQNAELQ…KGGLSLEMEK (211 aa)). The tract at residues 535–607 (TLSEMTNNND…FIKNLNSLIK (73 aa)) is c.

This sequence belongs to the heat shock protein 90 family. Homodimer.

The protein resides in the cytoplasm. Its function is as follows. Molecular chaperone. Has ATPase activity. The chain is Chaperone protein HtpG from Fusobacterium nucleatum subsp. nucleatum (strain ATCC 25586 / DSM 15643 / BCRC 10681 / CIP 101130 / JCM 8532 / KCTC 2640 / LMG 13131 / VPI 4355).